A 106-amino-acid polypeptide reads, in one-letter code: MADFLGMMKQAAQFQSKMKAMQDELDQIEVDGASGGGLVTVRMTAKMEVKGISIDPSLIKPDEREILEDLVVTALADARRKAEVAMQEKMQALTGGLGLPPGLGFS.

The protein belongs to the YbaB/EbfC family. Homodimer.

The protein localises to the cytoplasm. It is found in the nucleoid. Functionally, binds to DNA and alters its conformation. May be involved in regulation of gene expression, nucleoid organization and DNA protection. The chain is Nucleoid-associated protein Nwi_0368 from Nitrobacter winogradskyi (strain ATCC 25391 / DSM 10237 / CIP 104748 / NCIMB 11846 / Nb-255).